Consider the following 396-residue polypeptide: Arginine biosynthesis bifunctional protein ArgJ (396 aa).

The substrate site is built by T147, K173, T184, E270, N391, and S396. Residue T184 is the Nucleophile of the active site.

This sequence belongs to the ArgJ family. In terms of assembly, heterotetramer of two alpha and two beta chains.

It is found in the cytoplasm. It catalyses the reaction N(2)-acetyl-L-ornithine + L-glutamate = N-acetyl-L-glutamate + L-ornithine. The catalysed reaction is L-glutamate + acetyl-CoA = N-acetyl-L-glutamate + CoA + H(+). Its pathway is amino-acid biosynthesis; L-arginine biosynthesis; L-ornithine and N-acetyl-L-glutamate from L-glutamate and N(2)-acetyl-L-ornithine (cyclic): step 1/1. The protein operates within amino-acid biosynthesis; L-arginine biosynthesis; N(2)-acetyl-L-ornithine from L-glutamate: step 1/4. In terms of biological role, catalyzes two activities which are involved in the cyclic version of arginine biosynthesis: the synthesis of N-acetylglutamate from glutamate and acetyl-CoA as the acetyl donor, and of ornithine by transacetylation between N(2)-acetylornithine and glutamate. The chain is Arginine biosynthesis bifunctional protein ArgJ from Lactococcus lactis subsp. lactis (strain IL1403) (Streptococcus lactis).